We begin with the raw amino-acid sequence, 113 residues long: Large ribosomal subunit protein uL22 (113 aa).

This sequence belongs to the universal ribosomal protein uL22 family. As to quaternary structure, part of the 50S ribosomal subunit.

In terms of biological role, this protein binds specifically to 23S rRNA; its binding is stimulated by other ribosomal proteins, e.g. L4, L17, and L20. It is important during the early stages of 50S assembly. It makes multiple contacts with different domains of the 23S rRNA in the assembled 50S subunit and ribosome. The globular domain of the protein is located near the polypeptide exit tunnel on the outside of the subunit, while an extended beta-hairpin is found that lines the wall of the exit tunnel in the center of the 70S ribosome. This chain is Large ribosomal subunit protein uL22, found in Halothermothrix orenii (strain H 168 / OCM 544 / DSM 9562).